The following is a 314-amino-acid chain: tRNA dimethylallyltransferase (314 aa).

G8 to S15 is an ATP binding site. Residue T10–S15 participates in substrate binding.

It belongs to the IPP transferase family. Monomer. Mg(2+) is required as a cofactor.

The enzyme catalyses adenosine(37) in tRNA + dimethylallyl diphosphate = N(6)-dimethylallyladenosine(37) in tRNA + diphosphate. In terms of biological role, catalyzes the transfer of a dimethylallyl group onto the adenine at position 37 in tRNAs that read codons beginning with uridine, leading to the formation of N6-(dimethylallyl)adenosine (i(6)A). This Mycobacterium tuberculosis (strain ATCC 25177 / H37Ra) protein is tRNA dimethylallyltransferase.